The primary structure comprises 110 residues: DNA-directed RNA polymerase subunit omega (110 aa).

Belongs to the RNA polymerase subunit omega family. The RNAP catalytic core consists of 2 alpha, 1 beta, 1 beta' and 1 omega subunit. When a sigma factor is associated with the core the holoenzyme is formed, which can initiate transcription.

It catalyses the reaction RNA(n) + a ribonucleoside 5'-triphosphate = RNA(n+1) + diphosphate. Promotes RNA polymerase assembly. Latches the N- and C-terminal regions of the beta' subunit thereby facilitating its interaction with the beta and alpha subunits. The polypeptide is DNA-directed RNA polymerase subunit omega (Vesicomyosocius okutanii subsp. Calyptogena okutanii (strain HA)).